We begin with the raw amino-acid sequence, 364 residues long: Protein Wnt-16 (364 aa).

A signal peptide spans 1-29; it reads MDRAALLALPSLCALWAAVLSLLPCGTQG. 3 disulfide bridges follow: cysteine 81–cysteine 92, cysteine 138–cysteine 146, and cysteine 148–cysteine 167. N-linked (GlcNAc...) asparagine glycosylation occurs at asparagine 142. Asparagine 188 carries an N-linked (GlcNAc...) asparagine glycan. Intrachain disulfides connect cysteine 220–cysteine 234, cysteine 222–cysteine 229, cysteine 293–cysteine 324, cysteine 309–cysteine 319, cysteine 323–cysteine 363, cysteine 339–cysteine 354, cysteine 341–cysteine 351, and cysteine 346–cysteine 347. Serine 226 carries O-palmitoleoyl serine; by PORCN lipidation. The N-linked (GlcNAc...) asparagine glycan is linked to asparagine 310.

This sequence belongs to the Wnt family. Palmitoleoylation is required for efficient binding to frizzled receptors. Depalmitoleoylation leads to Wnt signaling pathway inhibition.

The protein resides in the secreted. It localises to the extracellular space. The protein localises to the extracellular matrix. Its function is as follows. Ligand for members of the frizzled family of seven transmembrane receptors. Probable developmental protein. May be a signaling molecule which affects the development of discrete regions of tissues. Is likely to signal over only few cell diameters. The polypeptide is Protein Wnt-16 (Wnt16) (Mus musculus (Mouse)).